The primary structure comprises 424 residues: Adenylosuccinate synthetase (424 aa).

GTP is bound by residues 12–18 and 40–42; these read GDEGKGK and GHT. Aspartate 13 acts as the Proton acceptor in catalysis. Residues aspartate 13 and glycine 40 each contribute to the Mg(2+) site. Residues 13–16, 38–41, threonine 130, arginine 144, asparagine 220, threonine 235, and arginine 299 each bind IMP; these read DEGK and NAGH. Residue histidine 41 is the Proton donor of the active site. Residue 295–301 participates in substrate binding; the sequence is VTTGRRR. Residues arginine 301, 327 to 329, and 412 to 414 contribute to the GTP site; these read KLD and GTG.

It belongs to the adenylosuccinate synthetase family. In terms of assembly, homodimer. Mg(2+) serves as cofactor.

The protein localises to the cytoplasm. The enzyme catalyses IMP + L-aspartate + GTP = N(6)-(1,2-dicarboxyethyl)-AMP + GDP + phosphate + 2 H(+). The protein operates within purine metabolism; AMP biosynthesis via de novo pathway; AMP from IMP: step 1/2. Its function is as follows. Plays an important role in the de novo pathway and in the salvage pathway of purine nucleotide biosynthesis. Catalyzes the first committed step in the biosynthesis of AMP from IMP. The protein is Adenylosuccinate synthetase of Aspergillus clavatus (strain ATCC 1007 / CBS 513.65 / DSM 816 / NCTC 3887 / NRRL 1 / QM 1276 / 107).